We begin with the raw amino-acid sequence, 198 residues long: Guanine nucleotide-binding protein subunit alpha-11 (198 aa).

The tract at residues 1–11 (LLGTGESGKST) is G1 motif. In terms of domain architecture, G-alpha spans 1–198 (LLGTGESGKS…LSEYDHVLVE (198 aa)). GTP-binding positions include 3–10 (GTGESGKS) and 137–140 (LRVR). Residue serine 10 coordinates Mg(2+). Positions 135-143 (DVLRVRVPT) are G2 motif. Threonine 143 is a Mg(2+) binding site. The interval 158-167 (FRMVDVGGQR) is G3 motif.

This sequence belongs to the G-alpha family. G(q) subfamily. In terms of assembly, g proteins are composed of 3 units; alpha, beta and gamma. The alpha chain contains the guanine nucleotide binding site. Interacts with RGS22. Interacts with NTSR1.

The protein resides in the cell membrane. It is found in the cytoplasm. It catalyses the reaction GTP + H2O = GDP + phosphate + H(+). Functionally, guanine nucleotide-binding proteins (G proteins) function as transducers downstream of G protein-coupled receptors (GPCRs) in numerous signaling cascades. The alpha chain contains the guanine nucleotide binding site and alternates between an active, GTP-bound state and an inactive, GDP-bound state. Signaling by an activated GPCR promotes GDP release and GTP binding. The alpha subunit has a low GTPase activity that converts bound GTP to GDP, thereby terminating the signal. Both GDP release and GTP hydrolysis are modulated by numerous regulatory proteins. Signaling is mediated via phospholipase C-beta-dependent inositol lipid hydrolysis for signal propagation: activates phospholipase C-beta: following GPCR activation, GNA11 activates PLC-beta (PLCB1, PLCB2, PLCB3 or PLCB4), leading to production of diacylglycerol (DAG) and inositol 1,4,5-trisphosphate (IP3). Transduces FFAR4 signaling in response to long-chain fatty acids (LCFAs). Together with GNAQ, required for heart development. In the respiratory epithelium, transmits OXGR1-dependent signals that lead to downstream intracellular Ca(2+) release and mucocilliary clearance of airborne pathogens. The chain is Guanine nucleotide-binding protein subunit alpha-11 (GNA11) from Canis lupus familiaris (Dog).